A 506-amino-acid polypeptide reads, in one-letter code: Cytochrome P450 94B3 (506 aa).

Residues 2–22 (AFLLSFLILAFLITIIFFLSS) traverse the membrane as a helical segment. Heme is bound at residue Cys447.

This sequence belongs to the cytochrome P450 family. Heme serves as cofactor.

The protein localises to the membrane. It is found in the endoplasmic reticulum membrane. It carries out the reaction a jasmonyl-L-amino acid + reduced [NADPH--hemoprotein reductase] + O2 = a 12-hydroxyjasmonyl-L-alpha-amino acid + oxidized [NADPH--hemoprotein reductase] + H2O + H(+). The enzyme catalyses L-isoleucine-(+)-7-isojasmonate + NADPH + O2 + H(+) = L-isoleucine-(+)-12-hydroxy-7-isojasmonate + NADP(+) + H2O. The catalysed reaction is a jasmonyl-L-isoleucinate + NADPH + O2 + H(+) = L-isoleucine-12-hydroxyjasmonate + NADP(+) + H2O. In terms of biological role, hydroxylase involved in the oxidation of the plant hormone jasmonoyl-L-isoleucine (JA-Ile), a bioactive phytohormone of the jasmonate-mediated signaling pathway. Converts JA-Ile to 12-hydroxy-JA-Ile. Exerts negative feedback control on JA-Ile levels and plays a key role in attenuation of jasmonate responses. Negatively regulates the expression of wound-induced genes TIFY11A/JAZ5, TIFY5A/JAZ8 and TIFY5A/JAZ10. Catalyzes the hydroxylation of jasmonoyl-L-valine (JA-Val), jasmonoyl-L-leucine (JA-Leu) and jasmonoyl-L-phenylalanine (JA-Phe) in vitro. Converts JA-Val, JA-Leu and JA-Phe to 12-hydroxy-JA-Val, 12-hydroxy-JA-Leu and 12-hydroxy-JA-Phe, respectively. This chain is Cytochrome P450 94B3, found in Arabidopsis thaliana (Mouse-ear cress).